The chain runs to 449 residues: MPLHIHFVGIKGTGMSALAQVTAHIEGAHITGSDVPERFFTDAVLERAHIPVLNFSAANVEKADIVVASAAYGENHEEIARARELNIPVYSYPQFLGRLMSKKRGIAVAGTHGKTTTTAMIGLALLQSGIDPTIVVGSDVPSIGGNAYSGQGDFFLAESCEYRRHFLNYSPEYLIITNIEFDHPDYFKDLDDVVCAFSEIAQKIPPHGRIFIWHEDPQRKAIQAQSPIITFGLNEEADVYATNIQFHDEGSTMTIVAHGTVLGEFHLHVSGKHNILNALASIALCLEIGVPTEKVLESLSHFNGTKRRFEHIGQNAGALIVDDYAHHPTEIRSTLEGARLSFPDRRIRAVFQPHTFSRTEKLLQEFSQSFQAADEVVIAEIFASARETNLNTISASSLADLISQQGVNARYIHSLEEIQTYLAQTLSPGDLVLTLGAGDIYKVGQSLVC.

110-116 is an ATP binding site; that stretch reads GTHGKTT.

Belongs to the MurCDEF family.

The protein localises to the cytoplasm. It carries out the reaction UDP-N-acetyl-alpha-D-muramate + L-alanine + ATP = UDP-N-acetyl-alpha-D-muramoyl-L-alanine + ADP + phosphate + H(+). It participates in cell wall biogenesis; peptidoglycan biosynthesis. Its function is as follows. Cell wall formation. This chain is UDP-N-acetylmuramate--L-alanine ligase, found in Desulfitobacterium hafniense (strain Y51).